The sequence spans 482 residues: Putative fatty acid desaturase 2-like protein FADS2B (482 aa).

The interval 1–31 is disordered; the sequence is MKFEEKCGDNGSIVGRNQSYPGEKHQPKGKP. Over 1-167 the chain is Cytoplasmic; sequence MKFEEKCGDN…EAMNMFHANL (167 aa). Residues 56–132 enclose the Cytochrome b5 heme-binding domain; the sequence is LSMYTWLEIQ…LKPLLIGELA (77 aa). The heme site is built by His-90 and His-113. A helical transmembrane segment spans residues 168–188; that stretch reads GFFFLHFVQILILEVLAWLIV. Topologically, residues 189–190 are lumenal; the sequence is YH. A helical membrane pass occupies residues 191–211; sequence FGSGWPVTMFISFLLTISQAS. Topologically, residues 212–305 are cytoplasmic; sequence SSFLQHDAGH…YEEQHLYFYK (94 aa). A Histidine box-1 motif is present at residues 217–221; that stretch reads HDAGH. The Histidine box-2 signature appears at 254 to 258; it reads HFEQH. A helical transmembrane segment spans residues 306 to 326; that stretch reads VWLPLFMPVYLKLPSMQAMYL. Residues 327 to 343 are Lumenal-facing; the sequence is QRYWVCFSLQDITWVSS. A helical membrane pass occupies residues 344–364; the sequence is FYIYFITFGLYYGIFGTMLLI. Residues 365–482 are Cytoplasmic-facing; sequence YLVKFLESPW…AALWADAYYE (118 aa). The short motif at 421-425 is the Histidine box-3 element; that stretch reads QIEHH.

Belongs to the fatty acid desaturase type 1 family.

The protein resides in the endoplasmic reticulum membrane. It participates in lipid metabolism; polyunsaturated fatty acid biosynthesis. In Homo sapiens (Human), this protein is Putative fatty acid desaturase 2-like protein FADS2B.